The sequence spans 589 residues: LRR receptor-like serine/threonine-protein kinase FEI 2 (589 aa).

The N-terminal stretch at 1–28 (MGICLMKRCCSWFLLISFLSALTNENEA) is a signal peptide. The Extracellular segment spans residues 29–236 (ISPDGEALLS…TGQGGNNPKR (208 aa)). LRR repeat units lie at residues 72 to 96 (TKRV…LGKL), 97 to 120 (DQLR…LGNC), 122 to 144 (ALEG…IGNL), 145 to 168 (SGLK…LGQL), and 170 to 193 (RLTK…LLAR). Asn-119 and Asn-143 each carry an N-linked (GlcNAc...) asparagine glycan. N-linked (GlcNAc...) asparagine glycans are attached at residues Asn-175, Asn-215, and Asn-219. Residues 237–257 (LLISASATVGGLLLVALMCFW) traverse the membrane as a helical segment. Over 258-589 (GCFLYKKLGR…PSDFYDSSSD (332 aa)) the chain is Cytoplasmic. One can recognise a Protein kinase domain in the interval 304 to 576 (LNEEHIIGCG…VVQLLESEVM (273 aa)). ATP-binding positions include 310 to 318 (IGCGGFGTV) and Lys-332. Residue Ser-384 is modified to Phosphoserine. Asp-427 acts as the Proton acceptor in catalysis. A phosphothreonine mark is found at Thr-460, Thr-461, and Thr-466. At Tyr-474 the chain carries Phosphotyrosine.

This sequence belongs to the protein kinase superfamily. Ser/Thr protein kinase family. In terms of assembly, interacts with the ACC synthases ACS5 and ACS9 but not ACS2, via the kinase domain. Post-translationally, autophosphorylated. In terms of tissue distribution, expressed in the root meristem and elongation zone, and in hypocotyls of etiolated seedlings.

The protein resides in the cell membrane. The catalysed reaction is L-seryl-[protein] + ATP = O-phospho-L-seryl-[protein] + ADP + H(+). It catalyses the reaction L-threonyl-[protein] + ATP = O-phospho-L-threonyl-[protein] + ADP + H(+). Involved in the signaling pathway that regulates cell wall function, including cellulose biosynthesis, likely via an 1-aminocyclopropane-1-carboxylic acid (ACC)-mediated signal (a precursor of ethylene). The sequence is that of LRR receptor-like serine/threonine-protein kinase FEI 2 (FEI2) from Arabidopsis thaliana (Mouse-ear cress).